Consider the following 836-residue polypeptide: Glutamate receptor ionotropic, kainate glr-3 (836 aa).

The N-terminal stretch at 1–19 is a signal peptide; it reads MFWIAKTLIAFLILLKTDC. Residues 20–523 lie on the Extracellular side of the membrane; it reads YKIAIPANLI…WFKFMDPLST (504 aa). Cys76 and Cys320 are disulfide-bonded. N-linked (GlcNAc...) asparagine glycans are attached at residues Asn225, Asn257, Asn356, Asn391, and Asn419. Residues 478–480 and Arg485 contribute to the L-glutamate site; that span reads SLT. Residues 524-544 traverse the membrane as a helical segment; sequence QVWIMTFASYFVVSVAIWIIA. The Cytoplasmic portion of the chain corresponds to 545 to 600; the sequence is KISPYEQFERDEDNGQYKPVDNQFSLRNSFWFTVCSLMQQGSELCPRAASTRLLTG. A helical transmembrane segment spans residues 601-621; the sequence is IWWFFALILISSYTANLAAVL. The Extracellular segment spans residues 622-780; it reads TTRRMETPIE…KRKDQDDGES (159 aa). Residue 651 to 652 coordinates L-glutamate; sequence ST. N-linked (GlcNAc...) asparagine glycosylation occurs at Asn657. Position 699 (Glu699) interacts with L-glutamate. The helical transmembrane segment at 781–801 threads the bilayer; sequence IGGIFIILVVGLVLTAVLVIF. At 802–836 the chain is on the cytoplasmic side; the sequence is ELITTRKPSPAQSQVIRHVNVIPSFKLGFFRWNVN.

The protein belongs to the glutamate-gated ion channel (TC 1.A.10.1) family. As to expression, expressed in the intestine and in the ASER neuron. Also expressed in the thermosensitive RIA interneuron.

The protein localises to the cell membrane. The protein resides in the postsynaptic cell membrane. Activated by low temperature of 18 degrees Celsius in ASER neuron. Its function is as follows. Ionotropic glutamate receptor. Activation by glutamate requires additional verification. L-glutamate acts as an excitatory neurotransmitter at many synapses in the central nervous system. Binding of the excitatory neurotransmitter L-glutamate induces a conformation change, leading to the opening of the cation channel, and thereby converts the chemical signal to an electrical impulse. The receptor then desensitizes rapidly and enters a transient inactive state, characterized by the presence of bound agonist. Independent of its ionotropic glutamate receptor activity, acts as a thermoreceptor in the ASER neuron where it triggers a calcium response to activate cold avoidance behavior in response to temperatures below 19 degrees Celsius. Possibly functions as a metabotropic cold receptor and acts upstream of the G(o) G protein goa-1 in the ASER neuron. Also functions in cold sensing in the intestine. The chain is Glutamate receptor ionotropic, kainate glr-3 from Caenorhabditis elegans.